Consider the following 209-residue polypeptide: MSKKKRTASSTRWLKEHFDDKYVQQAQKQGLRSRAVFKIDEIQQKDKLIKQGMTVVDLGAAPGGWSQFCVEQVGPHGRVIACDILPMDPIAGVDFLQGDFREEAVLSALLGRVGEQKVDIILSDMAPNMSGTPAVDQPRSMYLVELALEMCKQVLAAKGSFVVKVFQGAGFEEYLKEVRSLFSVVKIRKPDSSRSRSREVYIVATGFKL.

Positions 63, 65, 83, 99, and 124 each coordinate S-adenosyl-L-methionine. The Proton acceptor role is filled by Lys-164.

This sequence belongs to the class I-like SAM-binding methyltransferase superfamily. RNA methyltransferase RlmE family.

The protein localises to the cytoplasm. It carries out the reaction uridine(2552) in 23S rRNA + S-adenosyl-L-methionine = 2'-O-methyluridine(2552) in 23S rRNA + S-adenosyl-L-homocysteine + H(+). Functionally, specifically methylates the uridine in position 2552 of 23S rRNA at the 2'-O position of the ribose in the fully assembled 50S ribosomal subunit. This chain is Ribosomal RNA large subunit methyltransferase E, found in Tolumonas auensis (strain DSM 9187 / NBRC 110442 / TA 4).